The following is a 77-amino-acid chain: Translation initiation factor IF-1, chloroplastic (77 aa).

An S1-like domain is found at methionine 1 to arginine 71.

It belongs to the IF-1 family. In terms of assembly, component of the 30S ribosomal translation pre-initiation complex which assembles on the 30S ribosome in the order IF-2 and IF-3, IF-1 and N-formylmethionyl-tRNA(fMet); mRNA recruitment can occur at any time during PIC assembly.

The protein resides in the plastid. The protein localises to the chloroplast. Its function is as follows. One of the essential components for the initiation of protein synthesis. Stabilizes the binding of IF-2 and IF-3 on the 30S subunit to which N-formylmethionyl-tRNA(fMet) subsequently binds. Helps modulate mRNA selection, yielding the 30S pre-initiation complex (PIC). Upon addition of the 50S ribosomal subunit IF-1, IF-2 and IF-3 are released leaving the mature 70S translation initiation complex. The sequence is that of Translation initiation factor IF-1, chloroplastic from Buxus microphylla (Littleleaf boxwood).